Here is a 327-residue protein sequence, read N- to C-terminus: ATP-dependent 6-phosphofructokinase (327 aa).

Gly-12 provides a ligand contact to ATP. Residues 22–26 (RGVVR) and 55–60 (RYSVSD) contribute to the ADP site. Residues 73–74 (RF) and 103–106 (GDGS) each bind ATP. Mg(2+) is bound at residue Asp-104. 127-129 (TID) contributes to the substrate binding site. The active-site Proton acceptor is Asp-129. Arg-156 serves as a coordination point for ADP. Substrate is bound by residues Arg-164 and 171–173 (MGR). ADP is bound by residues 187 to 189 (GCE), Lys-213, and 215 to 217 (KKH). Substrate is bound by residues Glu-224, Arg-245, and 251 to 254 (HIQR).

Belongs to the phosphofructokinase type A (PFKA) family. ATP-dependent PFK group I subfamily. Prokaryotic clade 'B1' sub-subfamily. In terms of assembly, homotetramer. The cofactor is Mg(2+).

The protein localises to the cytoplasm. The enzyme catalyses beta-D-fructose 6-phosphate + ATP = beta-D-fructose 1,6-bisphosphate + ADP + H(+). Its pathway is carbohydrate degradation; glycolysis; D-glyceraldehyde 3-phosphate and glycerone phosphate from D-glucose: step 3/4. Allosterically activated by ADP and other diphosphonucleosides, and allosterically inhibited by phosphoenolpyruvate. Functionally, catalyzes the phosphorylation of D-fructose 6-phosphate to fructose 1,6-bisphosphate by ATP, the first committing step of glycolysis. The polypeptide is ATP-dependent 6-phosphofructokinase (Yersinia pseudotuberculosis serotype O:1b (strain IP 31758)).